Consider the following 5488-residue polypeptide: Polyketide synthase PksN (5488 aa).

A condensation region spans residues 3–301 (RQLKSPLSEG…NMMAVRSKNI (299 aa)). Residues 165–205 (QQPSTADYYDFVDWENRMLTGREGEEHLAYWKEQLSGSLPV) form a WD 1 repeat. Positions 493 to 903 (TYKEVDEKST…EFPGILDQAV (411 aa)) are adenylation. The WD 2 repeat unit spans residues 965-1006 (RKELEKREIVFNRRKPNHLQLTEIEDQVLRIWEETLKVSGFG). Residues 983 to 1058 (LQLTEIEDQV…AISEYILEMK (76 aa)) enclose the Carrier 1 domain. Ser-1018 bears the O-(pantetheine 4'-phosphoryl)serine mark. In terms of domain architecture, Ketosynthase family 3 (KS3) 1 spans 1089–1515 (DDSVAIVGIS…GTNAHAIFEQ (427 aa)). Residues Cys-1261, His-1397, and His-1437 each act as for beta-ketoacyl synthase 1 activity in the active site. Residues 1700 to 1826 (HPLVHHNTSV…GKAELIQLKR (127 aa)) are N-terminal hotdog fold 1. Residues 1700 to 1992 (HPLVHHNTSV…TRVMEADIQT (293 aa)) enclose the PKS/mFAS DH 1 domain. Residue His-1729 is the Proton acceptor; for dehydratase activity 1 of the active site. The interval 1840–1992 (DQSKMDAASF…TRVMEADIQT (153 aa)) is C-terminal hotdog fold 1. Asp-1900 acts as the Proton donor; for dehydratase activity 1 in catalysis. One copy of the WD 3 repeat lies at 2165–2204 (KQAKGDGSKPWKDNGVYLISGGAGGLGHIFAKEIAEQTKN). Residues 2448 to 2525 (SLLDKVKAML…AFGKHLSEEY (78 aa)) enclose the Carrier 2 domain. At Ser-2485 the chain carries O-(pantetheine 4'-phosphoryl)serine. The 437-residue stretch at 2576 to 3012 (PEPIAIVGIS…GVNAHVIIEE (437 aa)) folds into the Ketosynthase family 3 (KS3) 2 domain. Active-site for beta-ketoacyl synthase 2 activity residues include Cys-2747, His-2882, and His-2928. A coiled-coil region spans residues 3038-3109 (KNEARLKEHA…AAEKSGVEDV (72 aa)). The interval 3207-3332 (HPLMHQNTSN…GSAVLNPAEN (126 aa)) is N-terminal hotdog fold 2. The PKS/mFAS DH 2 domain maps to 3207–3492 (HPLMHQNTSN…FRAAEGGSGS (286 aa)). The active-site Proton acceptor; for dehydratase activity 2 is His-3236. The C-terminal hotdog fold 2 stretch occupies residues 3346-3492 (QESHFSVNEV…FRAAEGGSGS (147 aa)). Asp-3408 serves as the catalytic Proton donor; for dehydratase activity 2. The stretch at 3626 to 3655 (DSHENVESVIEKLKENKRHTEDQHIKYEKG) forms a coiled coil. The WD 4 repeat unit spans residues 3666–3705 (QIDDREISMPWRDKGVYLITGGAGGLGFIFAKEIARQAEQ). The region spanning 3952-4026 (DHIQEVLKQT…AFAGYLSEEY (75 aa)) is the Carrier 3 domain. Ser-3986 carries the post-translational modification O-(pantetheine 4'-phosphoryl)serine. The region spanning 4076 to 4511 (PEPIAIVGMS…GVNAHVVIEE (436 aa)) is the Ketosynthase family 3 (KS3) 3 domain. Catalysis depends on for beta-ketoacyl synthase 3 activity residues Cys-4245, His-4380, and His-4427. The interval 4706 to 4830 (HPLIHVNTSD…GSASIRGAGD (125 aa)) is N-terminal hotdog fold 3. The region spanning 4706–4988 (HPLIHVNTSD…SRLLEEGIQP (283 aa)) is the PKS/mFAS DH 3 domain. His-4735 acts as the Proton acceptor; for dehydratase activity 3 in catalysis. Positions 4844 to 4988 (SLSTLSHDQC…SRLLEEGIQP (145 aa)) are C-terminal hotdog fold 3. Catalysis depends on Asp-4906, which acts as the Proton donor; for dehydratase activity 3. The stretch at 5206 to 5244 (HNNQPVHTKYKHGGVYVVIGGAGGIGEAWSEYMIRTYQA) is one WD 5 repeat. Residues 5275 to 5303 (IQADAANREELERAYETMKQTHREINGII) are a coiled coil.

The protein belongs to the ATP-dependent AMP-binding enzyme family. It depends on pantetheine 4'-phosphate as a cofactor.

The protein resides in the cytoplasm. It functions in the pathway antibiotic biosynthesis; bacillaene biosynthesis. Functionally, involved in some intermediate steps for the synthesis of the antibiotic polyketide bacillaene which is involved in secondary metabolism. This is Polyketide synthase PksN (pksN) from Bacillus subtilis (strain 168).